A 302-amino-acid polypeptide reads, in one-letter code: Sulfate adenylyltransferase subunit 2 (302 aa).

The protein belongs to the PAPS reductase family. CysD subfamily. In terms of assembly, heterodimer composed of CysD, the smaller subunit, and CysN.

The enzyme catalyses sulfate + ATP + H(+) = adenosine 5'-phosphosulfate + diphosphate. Its pathway is sulfur metabolism; hydrogen sulfide biosynthesis; sulfite from sulfate: step 1/3. Its function is as follows. With CysN forms the ATP sulfurylase (ATPS) that catalyzes the adenylation of sulfate producing adenosine 5'-phosphosulfate (APS) and diphosphate, the first enzymatic step in sulfur assimilation pathway. APS synthesis involves the formation of a high-energy phosphoric-sulfuric acid anhydride bond driven by GTP hydrolysis by CysN coupled to ATP hydrolysis by CysD. In Xanthomonas campestris pv. campestris (strain 8004), this protein is Sulfate adenylyltransferase subunit 2.